We begin with the raw amino-acid sequence, 987 residues long: UvrABC system protein A (987 aa).

An ATP-binding site is contributed by 33-40 (GLSGSGKS). The segment at 255–282 (CPVCDYSLPELEPRLFSFNAPVGACPSC) adopts a C4-type zinc-finger fold. 2 consecutive ABC transporter domains span residues 312 to 589 (WDRR…PRSL) and 609 to 938 (PNPK…QFLA). Residue 642–649 (GVSGSGKS) participates in ATP binding. A C4-type zinc finger spans residues 741–767 (CEACQGDGMIKVEMHFLPDVYVPCDVC). Residues 948-987 (ETRPAAMANKPDARPPRKVKPEKVAKAAKSATKKTAKKAS) form a disordered region. Residues 958–972 (PDARPPRKVKPEKVA) show a composition bias toward basic and acidic residues. The span at 978–987 (ATKKTAKKAS) shows a compositional bias: basic residues.

It belongs to the ABC transporter superfamily. UvrA family. In terms of assembly, forms a heterotetramer with UvrB during the search for lesions.

It is found in the cytoplasm. The UvrABC repair system catalyzes the recognition and processing of DNA lesions. UvrA is an ATPase and a DNA-binding protein. A damage recognition complex composed of 2 UvrA and 2 UvrB subunits scans DNA for abnormalities. When the presence of a lesion has been verified by UvrB, the UvrA molecules dissociate. This is UvrABC system protein A from Xanthomonas axonopodis pv. citri (strain 306).